The chain runs to 624 residues: Laccase-1 (624 aa).

Positions 1 to 20 (MRGLAKLFFLSCSFVSLVSS) are cleaved as a signal peptide. Plastocyanin-like domains lie at 72–183 (FASP…HSPN) and 195–343 (DRIV…CMFG). The Cu cation site is built by H117 and H119. C138 and C578 form a disulfide bridge. N149 carries N-linked (GlcNAc...) asparagine glycosylation. Cu cation contacts are provided by H162 and H164. N-linked (GlcNAc...) asparagine glycans are attached at residues N242 and N430. The Plastocyanin-like 3 domain maps to 469–562 (IIINNLDTVI…GKLAVIVVQP (94 aa)). Cu cation is bound by residues H480, H483, and H485. Residue N503 is glycosylated (N-linked (GlcNAc...) asparagine). Residues H543, C544, H545, and H549 each contribute to the Cu cation site. Positions 579-604 (ANTDPNAFGPAKRSSSPSIQSSKTSS) are disordered. Residues 592–604 (SSSPSIQSSKTSS) show a composition bias toward low complexity.

This sequence belongs to the multicopper oxidase family. Cu cation is required as a cofactor.

The protein resides in the secreted. Its subcellular location is the cell wall. The catalysed reaction is 4 hydroquinone + O2 = 4 benzosemiquinone + 2 H2O. Functionally, laccase that catalyzes the oxidation of certain aromatic compounds, including L-dopa, to quinones, which then polymerize to melanin. Able to oxidize a wide variety of aromatic diphenol and diamino groups in the ortho, meta, and para positions but not monophenolic groups such as in phenol, tyramine, or tyrosine. Plays an important role in virulence. Plays a role in dissemination to extrapulmonary sites but is not involved in pulmonary growth or in elicitation of cellular immune responses in the lung. This chain is Laccase-1, found in Cryptococcus neoformans var. neoformans serotype D (strain B-3501A) (Filobasidiella neoformans).